The primary structure comprises 106 residues: ATP-dependent Clp protease adapter protein ClpS (106 aa).

Belongs to the ClpS family. In terms of assembly, binds to the N-terminal domain of the chaperone ClpA.

Its function is as follows. Involved in the modulation of the specificity of the ClpAP-mediated ATP-dependent protein degradation. The chain is ATP-dependent Clp protease adapter protein ClpS from Cronobacter sakazakii (strain ATCC BAA-894) (Enterobacter sakazakii).